The following is a 147-amino-acid chain: Protein phosphatase 1 regulatory subunit 14A (147 aa).

Residues 1–11 are compositionally biased toward basic residues; that stretch reads MAAQRLGKRVL. Positions 1-37 are disordered; sequence MAAQRLGKRVLSKLQSPSRARGPGGSPGGLQKRHARV. The residue at position 26 (Ser26) is a Phosphoserine. The tract at residues 35–120 is inhibitory; sequence ARVTVKYDRR…LLVKLRGLHK (86 aa). Thr38 is modified (phosphothreonine). The segment at 118-147 is disordered; sequence LHKQPGLRQPSPSGDGSLSPRQDRARTAPP. The span at 127–137 shows a compositional bias: polar residues; sequence PSPSGDGSLSP. 3 positions are modified to phosphoserine: Ser128, Ser134, and Ser136. Residues 138–147 are compositionally biased toward basic and acidic residues; that stretch reads RQDRARTAPP.

It belongs to the PP1 inhibitor family. In terms of processing, phosphorylation of Thr-38 induces a conformation change. In terms of tissue distribution, detected in aorta smooth muscle and bladder.

The protein localises to the cytoplasm. Inhibitor of PPP1CA. Has over 1000-fold higher inhibitory activity when phosphorylated, creating a molecular switch for regulating the phosphorylation status of PPP1CA substrates and smooth muscle contraction. The protein is Protein phosphatase 1 regulatory subunit 14A (CPI17) of Sus scrofa (Pig).